We begin with the raw amino-acid sequence, 359 residues long: MAHRTALYDAHLAAGGKMVDFGGWDMPINYGSQIEEHHAVRQNAGVFDVSHMTVVDIAGAGARDYLRQLLANDVDRIDPGRALYTGMLNDNGGVIDDLIVYKRDNDYRLVVNCATRETDLGWMEKHAGGFAVDIHERPELAMLAIQGPKARDILAGLLNGSRADAVKSLKVFAFAEDGDWMIARTGYTGEDGVEIMLPNADALTLWEQLLEAGVSPIGLGARDTLRLEAGLNLYGNDMDESITPWEANMGWTVMLNDREFIGRQPLLNQKENGHSEQVGLILEGKGVLRAHQKVLMPNGEEGEITSGTFSPTLGKSIALARLPAGATGKVDVEIRNKRQVAQVVKPPFVRNGNAVYKEQ.

It belongs to the GcvT family. The glycine cleavage system is composed of four proteins: P, T, L and H.

The catalysed reaction is N(6)-[(R)-S(8)-aminomethyldihydrolipoyl]-L-lysyl-[protein] + (6S)-5,6,7,8-tetrahydrofolate = N(6)-[(R)-dihydrolipoyl]-L-lysyl-[protein] + (6R)-5,10-methylene-5,6,7,8-tetrahydrofolate + NH4(+). Functionally, the glycine cleavage system catalyzes the degradation of glycine. This is Aminomethyltransferase from Alcanivorax borkumensis (strain ATCC 700651 / DSM 11573 / NCIMB 13689 / SK2).